The chain runs to 131 residues: MLKEFREFAVKGNVIDLAVGVIIGGAFGKIVTSLVNDLIMPLVGIIIGGHDFSGLSIKIGSAQILYGSFIQTVIDFLIISFSIFIFIRYLNKLKRKKVEEEEVVETPDQTEVLLTEIRDLLKHQSQSKDVQ.

A run of 2 helical transmembrane segments spans residues 14–34 and 67–87; these read VIDL…VTSL and GSFI…FIFI.

Belongs to the MscL family. Homopentamer.

It is found in the cell membrane. Channel that opens in response to stretch forces in the membrane lipid bilayer. May participate in the regulation of osmotic pressure changes within the cell. The chain is Large-conductance mechanosensitive channel from Bacillus pumilus (strain SAFR-032).